Consider the following 886-residue polypeptide: DNA double-strand break repair Rad50 ATPase (886 aa).

ATP contacts are provided by residues Arg13, 33-39, and Gln128; that span reads NGAGKSS. 2 coiled-coil regions span residues 183-360 and 400-433; these read EQIK…LLET and KEITEKLKKLIAKKSSLKTRGAQLKKAVEELKSA. The Zinc-hook domain occupies 392-489; that stretch reads LSKAKEEEKE…RLEKVEKALE (98 aa). Residues Cys437 and Cys440 each contribute to the Zn(2+) site. Coiled-coil stretches lie at residues 489-518 and 545-713; these read EKQETVLKYRQMVDELKALENELSSHDAEK and SSAS…KKVE. 792 to 797 is an ATP binding site; the sequence is FLSGGE.

Belongs to the SMC family. RAD50 subfamily. In terms of assembly, homodimer. Forms a heterotetramer composed of two Mre11 subunits and two Rad50 subunits. Zn(2+) serves as cofactor.

Functionally, part of the Rad50/Mre11 complex, which is involved in the early steps of DNA double-strand break (DSB) repair. The complex may facilitate opening of the processed DNA ends to aid in the recruitment of HerA and NurA. Rad50 controls the balance between DNA end bridging and DNA resection via ATP-dependent structural rearrangements of the Rad50/Mre11 complex. The sequence is that of DNA double-strand break repair Rad50 ATPase from Archaeoglobus fulgidus (strain ATCC 49558 / DSM 4304 / JCM 9628 / NBRC 100126 / VC-16).